Here is a 621-residue protein sequence, read N- to C-terminus: Proton pump-interactor BIP131 (621 aa).

The stretch at 250 to 305 forms a coiled coil; the sequence is IDEVKRDRQAVRDKIKVLEDQIHAVDGEIAALQDDLTAATARKDKAFEALNELRKT. The segment covering 374-387 has biased composition (basic and acidic residues); that stretch reads SRDGRMRNPDEKPI. Residues 374 to 572 form a disordered region; sequence SRDGRMRNPD…RSTVTKTKTP (199 aa). Residues 430–441 are compositionally biased toward low complexity; sequence KAPAKAAKAKQP. The span at 448–516 shows a compositional bias: basic and acidic residues; it reads PDVHDDEPPK…AEKKLKEKEK (69 aa). Positions 466-524 form a coiled coil; the sequence is EAKLKEMKRQEEIEKNKLALERKKKQAEKQAMKAAARAEKEAEKKLKEKEKKARKRSAT. A helical transmembrane segment spans residues 589–609; sequence WGAPMAALAAALVALLGALVY.

This sequence belongs to the plant proton pump-interactor protein family. In terms of assembly, interacts with BRI1.

It localises to the cell membrane. Its function is as follows. May regulate plasma membrane ATPase activity. The polypeptide is Proton pump-interactor BIP131 (Oryza sativa subsp. japonica (Rice)).